The chain runs to 427 residues: Glutamate-1-semialdehyde 2,1-aminomutase (427 aa).

K267 is modified (N6-(pyridoxal phosphate)lysine).

Belongs to the class-III pyridoxal-phosphate-dependent aminotransferase family. HemL subfamily. As to quaternary structure, homodimer. Requires pyridoxal 5'-phosphate as cofactor.

The protein localises to the cytoplasm. It carries out the reaction (S)-4-amino-5-oxopentanoate = 5-aminolevulinate. The protein operates within porphyrin-containing compound metabolism; protoporphyrin-IX biosynthesis; 5-aminolevulinate from L-glutamyl-tRNA(Glu): step 2/2. This is Glutamate-1-semialdehyde 2,1-aminomutase from Geotalea uraniireducens (strain Rf4) (Geobacter uraniireducens).